The following is a 951-amino-acid chain: Thyroid hormone receptor-associated protein 3 (951 aa).

Residues 1–13 show a composition bias toward low complexity; it reads MSKTNKSKSGSRS. A disordered region spans residues 1 to 94; that stretch reads MSKTNKSKSG…YFRGRNRGFY (94 aa). At serine 2 the chain carries N-acetylserine. The segment at 2-190 is required for mRNA splicing activation; the sequence is SKTNKSKSGS…KSSSKDSRPS (189 aa). Basic residues predominate over residues 14-51; sequence SRSRSASRSRSRSFSKSRSRSRSVSRSRKRRLSSRSRS. Arginine 17 is modified (dimethylated arginine). Residues 58-75 are compositionally biased toward basic and acidic residues; the sequence is HNRERNHPRVYQNRDFRG. Position 66 is an asymmetric dimethylarginine (arginine 66). A compositionally biased stretch (low complexity) spans 82–94; the sequence is RPYYFRGRNRGFY. Residues arginine 101 and arginine 108 each carry the asymmetric dimethylarginine modification. Positions 117-558 are disordered; that stretch reads AYSPRRGRSR…GDFSSGKSSF (442 aa). Residues 121–143 show a composition bias toward basic residues; that stretch reads RRGRSRSRSPKRRSPSPRSRSHS. Over residues 144–155 the composition is skewed to basic and acidic residues; it reads RNSDKSSSDRSR. Positions 157–166 are enriched in low complexity; it reads SSSSRSSSNH. The segment covering 167–188 has biased composition (basic and acidic residues); the sequence is SRVESSKRKSTKEKKSSSKDSR. Lysine 202 is covalently cross-linked (Glycyl lysine isopeptide (Lys-Gly) (interchain with G-Cter in SUMO1); alternate). Lysine 202 is covalently cross-linked (Glycyl lysine isopeptide (Lys-Gly) (interchain with G-Cter in SUMO2); alternate). Residues 204–220 are compositionally biased toward polar residues; it reads QTFSGGTSQDIKGSESS. Residue lysine 215 forms a Glycyl lysine isopeptide (Lys-Gly) (interchain with G-Cter in SUMO2) linkage. The residue at position 220 (serine 220) is a Phosphoserine. Residue lysine 221 forms a Glycyl lysine isopeptide (Lys-Gly) (interchain with G-Cter in SUMO2); alternate linkage. At lysine 221 the chain carries N6-acetyllysine; alternate. A phosphoserine mark is found at serine 233, serine 238, serine 240, serine 243, and serine 248. A Glycyl lysine isopeptide (Lys-Gly) (interchain with G-Cter in SUMO2); alternate cross-link involves residue lysine 252. Residue lysine 252 is modified to N6-methyllysine; alternate. Residues serine 253 and serine 257 each carry the phosphoserine modification. Pro residues predominate over residues 266-276; the sequence is RPSPVPKPSPP. The segment covering 305–322 has biased composition (low complexity); sequence GSGSLSPSKKSPVGKSPP. Serine 315 and serine 320 each carry phosphoserine. Position 324 is a phosphothreonine (threonine 324). Serine 326 bears the Phosphoserine mark. Tyrosine 328 carries the phosphotyrosine modification. Residue lysine 333 forms a Glycyl lysine isopeptide (Lys-Gly) (interchain with G-Cter in SUMO2) linkage. A compositionally biased stretch (low complexity) spans 337 to 346; the sequence is AASGGAAYSK. The residue at position 339 (serine 339) is a Phosphoserine. Residue lysine 346 forms a Glycyl lysine isopeptide (Lys-Gly) (interchain with G-Cter in SUMO2); alternate linkage. The residue at position 346 (lysine 346) is an N6-acetyllysine; alternate. The segment covering 347–387 has biased composition (basic and acidic residues); it reads RYLEEQKTENGKDKEQKQTNADKEKLKEKGGFSDADVKMKS. Glycyl lysine isopeptide (Lys-Gly) (interchain with G-Cter in SUMO2) cross-links involve residues lysine 353 and lysine 375. A required for mRNA decay activity region spans residues 359 to 951; it reads DKEQKQTNAD…EKDSLQPSAE (593 aa). Serine 379 carries the post-translational modification Phosphoserine. A Glycyl lysine isopeptide (Lys-Gly) (interchain with G-Cter in SUMO1); alternate cross-link involves residue lysine 384. Lysine 384 participates in a covalent cross-link: Glycyl lysine isopeptide (Lys-Gly) (interchain with G-Cter in SUMO2); alternate. Residues lysine 386 and lysine 393 each participate in a glycyl lysine isopeptide (Lys-Gly) (interchain with G-Cter in SUMO2) cross-link. Threonine 394 carries the phosphothreonine modification. A Glycyl lysine isopeptide (Lys-Gly) (interchain with G-Cter in SUMO2) cross-link involves residue lysine 398. Residues serine 403 and serine 405 each carry the phosphoserine modification. A compositionally biased stretch (basic and acidic residues) spans 411-449; the sequence is LRDDFEKKMADFHKEELDEHDKDKSKGRKEPEFDDEPKF. Glycyl lysine isopeptide (Lys-Gly) (interchain with G-Cter in SUMO2) cross-links involve residues lysine 418 and lysine 424. Lysine 448 participates in a covalent cross-link: Glycyl lysine isopeptide (Lys-Gly) (interchain with G-Cter in SUMO1); alternate. Residues lysine 448 and lysine 452 each participate in a glycyl lysine isopeptide (Lys-Gly) (interchain with G-Cter in SUMO2); alternate cross-link. Lysine 452 is subject to N6-acetyllysine; alternate. Glycyl lysine isopeptide (Lys-Gly) (interchain with G-Cter in SUMO2) cross-links involve residues lysine 459 and lysine 465. 2 stretches are compositionally biased toward basic and acidic residues: residues 460-483 and 490-518; these read NQEEEKSGKWESLHTGKEKQRKAE and FTERSRKEERGGSKRSESGHRGFVPEKNF. A Phosphoserine modification is found at serine 466. Glycyl lysine isopeptide (Lys-Gly) (interchain with G-Cter in SUMO2); alternate cross-links involve residues lysine 468 and lysine 476. Residues lysine 468 and lysine 476 each carry the N6-acetyllysine; alternate modification. Residue lysine 481 forms a Glycyl lysine isopeptide (Lys-Gly) (interchain with G-Cter in SUMO2) linkage. Lysine 516 is subject to N6-acetyllysine. Lysine 524 participates in a covalent cross-link: Glycyl lysine isopeptide (Lys-Gly) (interchain with G-Cter in SUMO2); alternate. Residue lysine 524 is modified to N6-acetyllysine; alternate. At serine 532 the chain carries Phosphoserine. Basic and acidic residues predominate over residues 537–547; that stretch reads KTSESRDKLGS. A Glycyl lysine isopeptide (Lys-Gly) (interchain with G-Cter in SUMO2) cross-link involves residue lysine 548. The span at 548 to 558 shows a compositional bias: low complexity; it reads KGDFSSGKSSF. 549–556 serves as a coordination point for ATP; sequence GDFSSGKS. Lysine 555 is covalently cross-linked (Glycyl lysine isopeptide (Lys-Gly) (interchain with G-Cter in SUMO2); alternate). Lysine 555 carries the post-translational modification N6-acetyllysine; alternate. 3 positions are modified to phosphoserine: serine 557, serine 559, and serine 572. Residue lysine 599 forms a Glycyl lysine isopeptide (Lys-Gly) (interchain with G-Cter in SUMO2) linkage. Phosphoserine is present on residues serine 616, serine 619, serine 669, serine 679, and serine 681. The span at 660–677 shows a compositional bias: basic and acidic residues; the sequence is EQEAAKNKKSPEIHRRID. The segment at 660-951 is disordered; it reads EQEAAKNKKS…EKDSLQPSAE (292 aa). The span at 688 to 758 shows a compositional bias: basic and acidic residues; the sequence is LTHEELKSPR…RSTEKTEKTH (71 aa). Lysine 694 participates in a covalent cross-link: Glycyl lysine isopeptide (Lys-Gly) (interchain with G-Cter in SUMO2). Serine 695 is modified (phosphoserine). Glycyl lysine isopeptide (Lys-Gly) (interchain with G-Cter in SUMO2) cross-links involve residues lysine 702, lysine 706, lysine 708, lysine 753, and lysine 756. Over residues 759–772 the composition is skewed to basic residues; it reads KGSKKQKKHRRARD. Over residues 776–786 the composition is skewed to low complexity; that stretch reads SSSSSSQSSHS. Lysine 808 carries the N6-acetyllysine modification. Asymmetric dimethylarginine is present on arginine 841. Over residues 844–854 the composition is skewed to low complexity; sequence YSGNNNNNSNN. Serine 860 bears the Phosphoserine mark. Threonine 870 carries the post-translational modification Phosphothreonine. Residues lysine 872 and lysine 875 each participate in a glycyl lysine isopeptide (Lys-Gly) (interchain with G-Cter in SUMO2) cross-link. A compositionally biased stretch (basic and acidic residues) spans 877-891; sequence YLHDDREGEGSDKWM. A phosphoserine mark is found at serine 924 and serine 935. Residues 926 to 936 show a composition bias toward acidic residues; sequence EEGEIEDDESG.

Belongs to the BCLAF1/THRAP3 family. Associated with the large multiprotein complex TRAP (Mediator complex-like). Interacts with SFPQ; the interaction is dependent on SFPQ phosphorylation at 'Thr-687' and inhibits binding of SFPQ to an ESS1 exonic splicing silencer element-containing RNA. Interacts with NXF1. Component of the SNARP complex which consists at least of SNIP1, SNW1, THRAP3, BCLAF1 and PNN. Associated with spliced mRNP complexes. Interacts with HELZ2 and PPARG. Interacts with CLOCK and BMAL1. Component of a MACOM-like complex, named WTAP complex, composed of WTAP, ZC3H13, CBLL1, KIAA1429, RBM15, BCLAF1 and THRAP3.

The protein localises to the nucleus. It is found in the nucleoplasm. The protein resides in the nucleus speckle. Involved in pre-mRNA splicing. Remains associated with spliced mRNA after splicing which probably involves interactions with the exon junction complex (EJC). Can trigger mRNA decay which seems to be independent of nonsense-mediated decay involving premature stop codons (PTC) recognition. May be involved in nuclear mRNA decay. Involved in regulation of signal-induced alternative splicing. During splicing of PTPRC/CD45 is proposed to sequester phosphorylated SFPQ from PTPRC/CD45 pre-mRNA in resting T-cells. Involved in cyclin-D1/CCND1 mRNA stability probably by acting as component of the SNARP complex which associates with both the 3'end of the CCND1 gene and its mRNA. Involved in response to DNA damage. Is excluced from DNA damage sites in a manner that parallels transcription inhibition; the function may involve the SNARP complex. Initially thought to play a role in transcriptional coactivation through its association with the TRAP complex; however, it is not regarded as a stable Mediator complex subunit. Cooperatively with HELZ2, enhances the transcriptional activation mediated by PPARG, maybe through the stabilization of the PPARG binding to DNA in presence of ligand. May play a role in the terminal stage of adipocyte differentiation. Plays a role in the positive regulation of the circadian clock. Acts as a coactivator of the CLOCK-BMAL1 heterodimer and promotes its transcriptional activator activity and binding to circadian target genes. This Mus musculus (Mouse) protein is Thyroid hormone receptor-associated protein 3 (Thrap3).